We begin with the raw amino-acid sequence, 98 residues long: NADH-ubiquinone oxidoreductase chain 4L (98 aa).

3 helical membrane-spanning segments follow: residues 1-21 (MSMV…GMLV), 29-49 (SLLC…VTIL), and 61-81 (IVLL…LVMV).

The protein belongs to the complex I subunit 4L family. As to quaternary structure, core subunit of respiratory chain NADH dehydrogenase (Complex I) which is composed of 45 different subunits.

It localises to the mitochondrion inner membrane. The enzyme catalyses a ubiquinone + NADH + 5 H(+)(in) = a ubiquinol + NAD(+) + 4 H(+)(out). Its function is as follows. Core subunit of the mitochondrial membrane respiratory chain NADH dehydrogenase (Complex I) which catalyzes electron transfer from NADH through the respiratory chain, using ubiquinone as an electron acceptor. Part of the enzyme membrane arm which is embedded in the lipid bilayer and involved in proton translocation. This Canis latrans (Coyote) protein is NADH-ubiquinone oxidoreductase chain 4L (MT-ND4L).